Here is a 177-residue protein sequence, read N- to C-terminus: Nucleoside triphosphate/diphosphate phosphatase (177 aa).

Arginine 23 serves as the catalytic Proton donor. Mg(2+) is bound by residues asparagine 87, aspartate 103, aspartate 105, aspartate 107, aspartate 120, and glutamate 123.

It belongs to the Ntdp family. Mg(2+) is required as a cofactor.

It catalyses the reaction a ribonucleoside 5'-triphosphate + H2O = a ribonucleoside 5'-diphosphate + phosphate + H(+). The enzyme catalyses a ribonucleoside 5'-diphosphate + H2O = a ribonucleoside 5'-phosphate + phosphate + H(+). Has nucleoside phosphatase activity towards nucleoside triphosphates and nucleoside diphosphates. In Streptococcus mutans serotype c (strain ATCC 700610 / UA159), this protein is Nucleoside triphosphate/diphosphate phosphatase.